We begin with the raw amino-acid sequence, 138 residues long: Thyrotropin subunit beta (138 aa).

The N-terminal stretch at 1–20 (MTAIFLMSMLFGLACGQAMS) is a signal peptide. Disulfide bonds link Cys-22/Cys-72, Cys-36/Cys-87, Cys-39/Cys-125, Cys-47/Cys-103, Cys-51/Cys-105, and Cys-108/Cys-115. Residue Asn-43 is glycosylated (N-linked (GlcNAc...) asparagine). Positions 133 to 138 (VLEFSI) are excised as a propeptide.

Belongs to the glycoprotein hormones subunit beta family. Heterodimer of a common alpha chain and a unique beta chain which confers biological specificity to thyrotropin, lutropin, follitropin and gonadotropin.

It localises to the secreted. Indispensable for the control of thyroid structure and metabolism. The polypeptide is Thyrotropin subunit beta (TSHB) (Sus scrofa (Pig)).